The chain runs to 419 residues: Nodulation protein NoeE (419 aa).

Its function is as follows. Required for the formation of sulfated nod factor. Proposed to transfer activated sulfate (PAPS) to the fucose of the nod factor. This chain is Nodulation protein NoeE (noeE), found in Sinorhizobium fredii (strain NBRC 101917 / NGR234).